A 248-amino-acid chain; its full sequence is DNA polymerase sliding clamp (248 aa).

It belongs to the PCNA family. In terms of assembly, homotrimer. The subunits circularize to form a toroid; DNA passes through its center. Replication factor C (RFC) is required to load the toroid on the DNA.

Functionally, sliding clamp subunit that acts as a moving platform for DNA processing. Responsible for tethering the catalytic subunit of DNA polymerase and other proteins to DNA during high-speed replication. The sequence is that of DNA polymerase sliding clamp from Nitrosopumilus maritimus (strain SCM1).